We begin with the raw amino-acid sequence, 479 residues long: Pup--protein ligase (479 aa).

A Mg(2+)-binding site is contributed by Glu17. Position 62 (Arg62) interacts with ATP. Residue Tyr64 coordinates Mg(2+). The active-site Proton acceptor is the Asp66. A Mg(2+)-binding site is contributed by Glu72. Residues Ser75 and Trp432 each contribute to the ATP site.

This sequence belongs to the Pup ligase/Pup deamidase family. Pup-conjugating enzyme subfamily.

It catalyses the reaction ATP + [prokaryotic ubiquitin-like protein]-L-glutamate + [protein]-L-lysine = ADP + phosphate + N(6)-([prokaryotic ubiquitin-like protein]-gamma-L-glutamyl)-[protein]-L-lysine.. The protein operates within protein degradation; proteasomal Pup-dependent pathway. Its pathway is protein modification; protein pupylation. Functionally, catalyzes the covalent attachment of the prokaryotic ubiquitin-like protein modifier Pup to the proteasomal substrate proteins, thereby targeting them for proteasomal degradation. This tagging system is termed pupylation. The ligation reaction involves the side-chain carboxylate of the C-terminal glutamate of Pup and the side-chain amino group of a substrate lysine. This is Pup--protein ligase from Corynebacterium diphtheriae (strain ATCC 700971 / NCTC 13129 / Biotype gravis).